Reading from the N-terminus, the 423-residue chain is Transcription factor bHLH14 (423 aa).

The segment at 192–243 (GKTTKHTNQTGSYPKPAVSDHSKSGNQQFGSERKRRRKLETTRVAAATKEKH) is disordered. A bHLH domain is found at 245–294 (PAVLSHVEAEKQRREKLNHRFYALRAIVPKVSRMDKASLLSDAVSYIESL). Positions 312–343 (ETDKLDNSSSNTSPSSVEYQVNQKPSKSNRGS) are disordered. The span at 318-327 (NSSSNTSPSS) shows a compositional bias: low complexity. A compositionally biased stretch (polar residues) spans 328–342 (VEYQVNQKPSKSNRG).

Homodimer.

Its subcellular location is the nucleus. The protein is Transcription factor bHLH14 (BHLH14) of Arabidopsis thaliana (Mouse-ear cress).